Consider the following 149-residue polypeptide: Large ribosomal subunit protein bL9 (149 aa).

The protein belongs to the bacterial ribosomal protein bL9 family.

In terms of biological role, binds to the 23S rRNA. The polypeptide is Large ribosomal subunit protein bL9 (Xylella fastidiosa (strain M23)).